A 359-amino-acid polypeptide reads, in one-letter code: UPF0496 protein At3g57100 (359 aa).

A coiled-coil region spans residues 179–208; that stretch reads HEELAKMVVKLEKTMKDIDKKLRRVRGRRA. A helical membrane pass occupies residues 214–234; that stretch reads LLAPVIAVIFLSKLVAGLVPI.

This sequence belongs to the UPF0496 family.

It localises to the membrane. This Arabidopsis thaliana (Mouse-ear cress) protein is UPF0496 protein At3g57100.